A 464-amino-acid polypeptide reads, in one-letter code: ATP-dependent protease ATPase subunit HslU (464 aa).

Residues Ile-19, 61–66, Asp-277, Glu-342, and Arg-414 each bind ATP; that span reads GVGKTE.

It belongs to the ClpX chaperone family. HslU subfamily. A double ring-shaped homohexamer of HslV is capped on each side by a ring-shaped HslU homohexamer. The assembly of the HslU/HslV complex is dependent on binding of ATP.

It localises to the cytoplasm. Its function is as follows. ATPase subunit of a proteasome-like degradation complex; this subunit has chaperone activity. The binding of ATP and its subsequent hydrolysis by HslU are essential for unfolding of protein substrates subsequently hydrolyzed by HslV. HslU recognizes the N-terminal part of its protein substrates and unfolds these before they are guided to HslV for hydrolysis. This is ATP-dependent protease ATPase subunit HslU from Lactobacillus gasseri (strain ATCC 33323 / DSM 20243 / BCRC 14619 / CIP 102991 / JCM 1131 / KCTC 3163 / NCIMB 11718 / NCTC 13722 / AM63).